The primary structure comprises 526 residues: D-arabinono-1,4-lactone oxidase (526 aa).

The FAD-binding PCMH-type domain occupies 22–196; the sequence is FWSRPSLYFQ…VYATLRTVPA (175 aa). Histidine 59 bears the Pros-8alpha-FAD histidine mark.

It belongs to the oxygen-dependent FAD-linked oxidoreductase family. Requires FAD as cofactor.

Its subcellular location is the mitochondrion membrane. The enzyme catalyses D-arabinono-1,4-lactone + O2 = dehydro-D-arabinono-1,4-lactone + H2O2 + H(+). It functions in the pathway cofactor biosynthesis; D-erythroascorbate biosynthesis; dehydro-D-arabinono-1,4-lactone from D-arabinose: step 2/2. In Yarrowia lipolytica (strain CLIB 122 / E 150) (Yeast), this protein is D-arabinono-1,4-lactone oxidase (ALO1).